The chain runs to 645 residues: Cysteine-rich receptor-like protein kinase 10 (645 aa).

A signal peptide spans 1 to 27 (MSMACYYLAAAAAGLALLLLHAPLTDA). Gnk2-homologous domains follow at residues 28 to 132 (QTLV…NDAF) and 140 to 251 (SQGM…VYPF). Residues 28 to 283 (QTLVPLCGDS…AGERSKNKRS (256 aa)) lie on the Extracellular side of the membrane. Asn39 and Asn91 each carry an N-linked (GlcNAc...) asparagine glycan. 2 disulfides stabilise this stretch: Cys86–Cys95 and Cys98–Cys123. 2 N-linked (GlcNAc...) asparagine glycosylation sites follow: Asn151 and Asn169. 2 disulfides stabilise this stretch: Cys204/Cys213 and Cys216/Cys242. The chain crosses the membrane as a helical span at residues 284-304 (AILAISMPTIALVLATIAAWF). The Cytoplasmic portion of the chain corresponds to 305–645 (CSTSWRRRRL…WVQEIGATAS (341 aa)). Positions 348 to 619 (FSEHKRLGEG…PLMSAVNAML (272 aa)) constitute a Protein kinase domain. ATP contacts are provided by residues 354-362 (LGEGGFGVV) and Lys376. Asp473 (proton acceptor) is an active-site residue.

The protein belongs to the protein kinase superfamily. Ser/Thr protein kinase family. CRK subfamily.

It localises to the membrane. Its function is as follows. Involved in disease resistance. Required for NPR1/NH1-mediated immunity to the bacterial blight pathogen Xanthomomas oryzae pv. oryzae (Xoo). Required for the benzothiadiazole (BTH)-induced immune response. Probably regulated by the transcription factor TGA2.1. This is Cysteine-rich receptor-like protein kinase 10 from Oryza sativa subsp. japonica (Rice).